The following is a 127-amino-acid chain: Glycine cleavage system H protein (127 aa).

Residues 24 to 106 enclose the Lipoyl-binding domain; the sequence is VVTVGVTFHA…YGAGWFFKLK (83 aa). Lysine 65 carries the post-translational modification N6-lipoyllysine.

It belongs to the GcvH family. As to quaternary structure, the glycine cleavage system is composed of four proteins: P, T, L and H. (R)-lipoate serves as cofactor.

The glycine cleavage system catalyzes the degradation of glycine. The H protein shuttles the methylamine group of glycine from the P protein to the T protein. The protein is Glycine cleavage system H protein of Laribacter hongkongensis (strain HLHK9).